The chain runs to 282 residues: 3-methyl-2-oxobutanoate hydroxymethyltransferase (282 aa).

The Mg(2+) site is built by aspartate 44 and aspartate 83. 3-methyl-2-oxobutanoate-binding positions include 44–45 (DS), aspartate 83, and lysine 112. Glutamate 114 serves as a coordination point for Mg(2+). The active-site Proton acceptor is the glutamate 181.

The protein belongs to the PanB family. As to quaternary structure, homodecamer; pentamer of dimers. Mg(2+) is required as a cofactor.

It is found in the cytoplasm. The catalysed reaction is 3-methyl-2-oxobutanoate + (6R)-5,10-methylene-5,6,7,8-tetrahydrofolate + H2O = 2-dehydropantoate + (6S)-5,6,7,8-tetrahydrofolate. It participates in cofactor biosynthesis; coenzyme A biosynthesis. In terms of biological role, catalyzes the reversible reaction in which hydroxymethyl group from 5,10-methylenetetrahydrofolate is transferred onto alpha-ketoisovalerate to form ketopantoate. In Pyrococcus abyssi (strain GE5 / Orsay), this protein is 3-methyl-2-oxobutanoate hydroxymethyltransferase.